Consider the following 445-residue polypeptide: Phosphoglucosamine mutase (445 aa).

Residue serine 102 is the Phosphoserine intermediate of the active site. Residues serine 102, aspartate 241, aspartate 243, and aspartate 245 each coordinate Mg(2+). Serine 102 is subject to Phosphoserine.

This sequence belongs to the phosphohexose mutase family. Mg(2+) serves as cofactor. In terms of processing, activated by phosphorylation.

The enzyme catalyses alpha-D-glucosamine 1-phosphate = D-glucosamine 6-phosphate. Functionally, catalyzes the conversion of glucosamine-6-phosphate to glucosamine-1-phosphate. The protein is Phosphoglucosamine mutase of Aliivibrio fischeri (strain ATCC 700601 / ES114) (Vibrio fischeri).